The chain runs to 431 residues: Glutamate-1-semialdehyde 2,1-aminomutase (431 aa).

Lysine 269 is modified (N6-(pyridoxal phosphate)lysine).

This sequence belongs to the class-III pyridoxal-phosphate-dependent aminotransferase family. HemL subfamily. In terms of assembly, homodimer. Pyridoxal 5'-phosphate is required as a cofactor.

It is found in the cytoplasm. It carries out the reaction (S)-4-amino-5-oxopentanoate = 5-aminolevulinate. Its pathway is porphyrin-containing compound metabolism; protoporphyrin-IX biosynthesis; 5-aminolevulinate from L-glutamyl-tRNA(Glu): step 2/2. It functions in the pathway porphyrin-containing compound metabolism; chlorophyll biosynthesis. The protein is Glutamate-1-semialdehyde 2,1-aminomutase of Chlorobaculum tepidum (strain ATCC 49652 / DSM 12025 / NBRC 103806 / TLS) (Chlorobium tepidum).